The chain runs to 476 residues: Glycogen synthase (476 aa).

K15 provides a ligand contact to ADP-alpha-D-glucose.

The protein belongs to the glycosyltransferase 1 family. Bacterial/plant glycogen synthase subfamily.

The catalysed reaction is [(1-&gt;4)-alpha-D-glucosyl](n) + ADP-alpha-D-glucose = [(1-&gt;4)-alpha-D-glucosyl](n+1) + ADP + H(+). Its pathway is glycan biosynthesis; glycogen biosynthesis. Its function is as follows. Synthesizes alpha-1,4-glucan chains using ADP-glucose. The chain is Glycogen synthase from Chlamydia pneumoniae (Chlamydophila pneumoniae).